The primary structure comprises 122 residues: Ribosome-binding factor A (122 aa).

It belongs to the RbfA family. Monomer. Binds 30S ribosomal subunits, but not 50S ribosomal subunits or 70S ribosomes.

Its subcellular location is the cytoplasm. In terms of biological role, one of several proteins that assist in the late maturation steps of the functional core of the 30S ribosomal subunit. Associates with free 30S ribosomal subunits (but not with 30S subunits that are part of 70S ribosomes or polysomes). Required for efficient processing of 16S rRNA. May interact with the 5'-terminal helix region of 16S rRNA. This Polaromonas naphthalenivorans (strain CJ2) protein is Ribosome-binding factor A.